The sequence spans 367 residues: Phosphoribosylaminoimidazole-succinocarboxamide synthase (367 aa).

The protein belongs to the SAICAR synthetase family.

It catalyses the reaction 5-amino-1-(5-phospho-D-ribosyl)imidazole-4-carboxylate + L-aspartate + ATP = (2S)-2-[5-amino-1-(5-phospho-beta-D-ribosyl)imidazole-4-carboxamido]succinate + ADP + phosphate + 2 H(+). It functions in the pathway purine metabolism; IMP biosynthesis via de novo pathway; 5-amino-1-(5-phospho-D-ribosyl)imidazole-4-carboxamide from 5-amino-1-(5-phospho-D-ribosyl)imidazole-4-carboxylate: step 1/2. This chain is Phosphoribosylaminoimidazole-succinocarboxamide synthase, found in Vibrio campbellii (strain ATCC BAA-1116).